The chain runs to 88 residues: Stannin (88 aa).

The Mitochondrial intermembrane segment spans residues 1 to 10 (MSIMDHSPTT). A helical membrane pass occupies residues 11–31 (GVVTVIVILIAIAALGALILG). Residues 32-88 (CWCYLRLQRISQSEDEESIVGDGETKEPFLLVQYSAKGPCVERKAKLMTPNGPEVHG) lie on the Cytoplasmic side of the membrane. Serine 49 bears the Phosphoserine mark.

The protein belongs to the stannin family. Monomer.

It localises to the mitochondrion outer membrane. Its function is as follows. Plays a role in the toxic effects of organotins. Plays a role in endosomal maturation. This chain is Stannin (SNN), found in Homo sapiens (Human).